A 431-amino-acid polypeptide reads, in one-letter code: Divalent metal cation transporter MntH (431 aa).

The next 12 membrane-spanning stretches (helical) occupy residues 30-50 (WSWT…IDPG), 63-83 (GYTL…IQTL), 106-126 (PLVW…DLAE), 137-159 (LFGL…ALHL), 169-189 (ILIG…LVLS), 209-229 (YALY…VIYL), 257-277 (VILG…MAAA), 287-307 (VATI…VTAS), 309-329 (VFGL…TLSG), 341-361 (IPLW…IMLG), 367-387 (ALVA…VPLL), and 405-425 (VTGV…YVLF).

It belongs to the NRAMP family.

It localises to the cell inner membrane. Functionally, h(+)-stimulated, divalent metal cation uptake system. In Chromohalobacter salexigens (strain ATCC BAA-138 / DSM 3043 / CIP 106854 / NCIMB 13768 / 1H11), this protein is Divalent metal cation transporter MntH.